Reading from the N-terminus, the 183-residue chain is uncharacterized protein (183 aa).

This is an uncharacterized protein from Homo sapiens (Human).